The primary structure comprises 452 residues: Tripartite motif-containing protein 51G (452 aa).

The RING-type zinc-finger motif lies at 15–56 (CPICMNYFIDPVTIDCGHSFCRPCFYLNWQDMAVLAQCSKCK). A B box-type zinc finger spans residues 88 to 129 (SEEQICGTHRETKEMFCEVDKSLLCLLCSNSQEHRNHRHCPT). Zn(2+) is bound by residues Cys93, His96, Cys115, and His121. In terms of domain architecture, B30.2/SPRY spans 269–452 (EFSAGPIIGL…LWPIICCSHF (184 aa)).

Belongs to the TRIM/RBCC family.

The polypeptide is Tripartite motif-containing protein 51G (Homo sapiens (Human)).